Reading from the N-terminus, the 380-residue chain is D-threo-3-hydroxyaspartate dehydratase (380 aa).

Position 43 is an N6-(pyridoxal phosphate)lysine (Lys-43).

It belongs to the DSD1 family. Monomer. It depends on pyridoxal 5'-phosphate as a cofactor. The cofactor is Mn(2+). Co(2+) is required as a cofactor. Requires Ni(2+) as cofactor.

It catalyses the reaction (3R)-3-hydroxy-D-aspartate = oxaloacetate + NH4(+). Strongly inhibited by hydroxylamine. Modestly inhibited by EDTA. Its function is as follows. Catalyzes the deamination of D-threo-3-hydroxyaspartate (D-THA). Also exhibits dehydratase activity towards L-threo-3-hydroxyaspartate (L-THA), L-erythro-3-hydroxyaspartate (L-EHA) and D-serine. In Delftia sp. (strain HT23), this protein is D-threo-3-hydroxyaspartate dehydratase (dthadh).